The sequence spans 431 residues: Enolase (431 aa).

Residue Q162 participates in (2R)-2-phosphoglycerate binding. The active-site Proton donor is the E204. The Mg(2+) site is built by D241, E284, and D311. The (2R)-2-phosphoglycerate site is built by K336, R365, S366, and K387. The active-site Proton acceptor is the K336.

Belongs to the enolase family. It depends on Mg(2+) as a cofactor.

The protein localises to the cytoplasm. The protein resides in the secreted. It localises to the cell surface. It catalyses the reaction (2R)-2-phosphoglycerate = phosphoenolpyruvate + H2O. It functions in the pathway carbohydrate degradation; glycolysis; pyruvate from D-glyceraldehyde 3-phosphate: step 4/5. In terms of biological role, catalyzes the reversible conversion of 2-phosphoglycerate (2-PG) into phosphoenolpyruvate (PEP). It is essential for the degradation of carbohydrates via glycolysis. The sequence is that of Enolase from Sorangium cellulosum (strain So ce56) (Polyangium cellulosum (strain So ce56)).